A 673-amino-acid polypeptide reads, in one-letter code: Annexin A6 (673 aa).

A2 is subject to N-acetylalanine. S13 is subject to Phosphoserine. Annexin repeat units follow at residues 20–91 (FDAN…NLMR), 92–163 (PLAY…VLLQ), 175–247 (DLVQ…AVVK), 251–322 (STPE…KLCG), 363–434 (FNPD…GLMM), 435–506 (PPAH…SLAT), 521–595 (EDAQ…AIVQ), and 599–670 (NKPL…ALCG). Y30 carries the phosphotyrosine modification. 4 positions are modified to N6-acetyllysine: K63, K68, K75, and K81. Y201 carries the phosphotyrosine modification. An N6-acetyllysine mark is found at K306, K370, and K418. At S422 the chain carries Phosphoserine. Position 483 is an N6-acetyllysine (K483). S537 carries the phosphoserine modification. K620 is subject to N6-acetyllysine.

The protein belongs to the annexin family.

Its subcellular location is the cytoplasm. The protein localises to the melanosome. Its function is as follows. May associate with CD21. May regulate the release of Ca(2+) from intracellular stores. The protein is Annexin A6 (Anxa6) of Rattus norvegicus (Rat).